The following is a 489-amino-acid chain: NADH-quinone oxidoreductase subunit N (489 aa).

Transmembrane regions (helical) follow at residues 15 to 35 (APLLVVVTWATVLLLVDVFFI), 44 to 64 (GYLAIGGLVVAGLVGLPLWGV), 78 to 98 (FALTLTWIFLLIGILSITMSL), 106 to 126 (IEQGEYYPLIMFAVSGMILLA), 131 to 151 (LIVLFLGIETLSITLYILTGF), 166 to 186 (LVLGAFAAGFFVYGIALIFGA), 209 to 229 (LTLLLGGAAMVLIAFSFKVAL), 244 to 264 (PTPVAAFMSVGTKGGALAALV), 278 to 298 (WLPVLAGLTALTMVVGNLGAV), 306 to 326 (MLAYSSIGHAGYVMLGVMVAG), 333 to 353 (AFLFYMLVYALSNLGAFAVLI), 378 to 398 (LAVAMAIFMFSLAGVPPMAGF), 412 to 432 (GLPWLALVGVVTSAIAAFFYL), and 459 to 479 (IALAAIGTIAIGLIPAPVFAL).

It belongs to the complex I subunit 2 family. NDH-1 is composed of 14 different subunits. Subunits NuoA, H, J, K, L, M, N constitute the membrane sector of the complex.

Its subcellular location is the cell membrane. The catalysed reaction is a quinone + NADH + 5 H(+)(in) = a quinol + NAD(+) + 4 H(+)(out). In terms of biological role, NDH-1 shuttles electrons from NADH, via FMN and iron-sulfur (Fe-S) centers, to quinones in the respiratory chain. The immediate electron acceptor for the enzyme in this species is believed to be ubiquinone. Couples the redox reaction to proton translocation (for every two electrons transferred, four hydrogen ions are translocated across the cytoplasmic membrane), and thus conserves the redox energy in a proton gradient. This is NADH-quinone oxidoreductase subunit N from Chloroflexus aggregans (strain MD-66 / DSM 9485).